A 177-amino-acid chain; its full sequence is 2-C-methyl-D-erythritol 2,4-cyclodiphosphate synthase (177 aa).

Asp23 and His25 together coordinate a divalent metal cation. 4-CDP-2-C-methyl-D-erythritol 2-phosphate contacts are provided by residues 23 to 25 and 49 to 50; these read DVH and HS. Residue His57 participates in a divalent metal cation binding. Residues 71 to 73, 76 to 80, 115 to 121, and Arg157 each bind 4-CDP-2-C-methyl-D-erythritol 2-phosphate; these read DIG, FSDTD, and AQAPRMA.

Belongs to the IspF family. In terms of assembly, homotrimer. A divalent metal cation serves as cofactor.

The enzyme catalyses 4-CDP-2-C-methyl-D-erythritol 2-phosphate = 2-C-methyl-D-erythritol 2,4-cyclic diphosphate + CMP. It functions in the pathway isoprenoid biosynthesis; isopentenyl diphosphate biosynthesis via DXP pathway; isopentenyl diphosphate from 1-deoxy-D-xylulose 5-phosphate: step 4/6. Its function is as follows. Involved in the biosynthesis of isopentenyl diphosphate (IPP) and dimethylallyl diphosphate (DMAPP), two major building blocks of isoprenoid compounds. Catalyzes the conversion of 4-diphosphocytidyl-2-C-methyl-D-erythritol 2-phosphate (CDP-ME2P) to 2-C-methyl-D-erythritol 2,4-cyclodiphosphate (ME-CPP) with a corresponding release of cytidine 5-monophosphate (CMP). This chain is 2-C-methyl-D-erythritol 2,4-cyclodiphosphate synthase, found in Nitrosospira multiformis (strain ATCC 25196 / NCIMB 11849 / C 71).